The primary structure comprises 193 residues: Sporulation-specific transcriptional regulator GerR (193 aa).

The HTH myb-type domain occupies 1–61 (MTITRQDAWT…RWNSYVRKQY (61 aa)). The H-T-H motif DNA-binding region spans 35-57 (FEEVGRALTRTAAACGFRWNSYV). Residues 122–177 (AQEFQLEREKLKEQIQSLQKELEDLRSENQTLRNQLEMTEEDYKALIDIMDRARKM) adopt a coiled-coil conformation.

Belongs to the RsfA transcriptional regulator family.

In terms of biological role, transcriptional factor that regulates the expression of several late sporulation genes. Controls genes of both sigma-E and sigma-K regulons, acting alone on some genes and in conjunction with SpoIIID or GerE on others. Regulates, directly or indirectly, the expression of genes encoding coat proteins such as cgeA, cotB, cotC, cotG, cotU and cotY. Controls late sporulation genes in two ways: directly, by binding to the promoter region of genes such as cotB, cotU and spoVIF, and acting directly on their transcription, and indirectly, through the activation of SpoVIF, which stabilizes the transcriptional activator GerE and consequently induces the expression of the GerE-dependent genes, such as cotC and cotG. Its effect is strongly positive on spoVIF, cotC, and cotG, weakly positive on cotB, and negative on cotU. This Bacillus subtilis (strain 168) protein is Sporulation-specific transcriptional regulator GerR.